We begin with the raw amino-acid sequence, 534 residues long: ATP-dependent RNA helicase DBP3 (534 aa).

The disordered stretch occupies residues 1 to 96 (MGSKRKHESG…VSSSSSGYTQ (96 aa)). A compositionally biased stretch (basic and acidic residues) spans 8 to 30 (ESGDVEVKKPKHDNEVKGKEKKE). A compositionally biased stretch (basic residues) spans 31–53 (KKEKKEKKEKKEKKEKKEKKEKK). A compositionally biased stretch (basic and acidic residues) spans 54–63 (EKKEKNEKKE). Residues 82–92 (STVSTVSSSSS) show a composition bias toward low complexity. Residues 131-157 (LSFDHVQLQSKIAPIVTKFPKPTPIQS) carry the Q motif motif. Residues 160 to 330 (WPYLLNGDDV…ATFMNKAVKV (171 aa)) enclose the Helicase ATP-binding domain. 173-180 (AETGSGKT) lines the ATP pocket. Residues 278–281 (DEAD) carry the DEAD box motif. Residues 359 to 504 (RLLQLLRQYG…PVPDELLKFG (146 aa)) form the Helicase C-terminal domain.

This sequence belongs to the DEAD box helicase family. DDX5/DBP2 subfamily.

The protein localises to the nucleus. It localises to the nucleolus. The enzyme catalyses ATP + H2O = ADP + phosphate + H(+). In terms of biological role, ATP-dependent RNA helicase required for 60S ribosomal subunit synthesis. Involved in efficient pre-rRNA processing, predominantly at site A3, which is necessary for the normal formation of 25S and 5.8S rRNAs. This Meyerozyma guilliermondii (strain ATCC 6260 / CBS 566 / DSM 6381 / JCM 1539 / NBRC 10279 / NRRL Y-324) (Yeast) protein is ATP-dependent RNA helicase DBP3 (DBP3).